We begin with the raw amino-acid sequence, 147 residues long: Ribonuclease 4 (147 aa).

An N-terminal signal peptide occupies residues 1–28 (MDIQRTQSLLLLLLLTLLGLGLVQPSYG). Residue Gln29 is modified to Pyrrolidone carboxylic acid. Positions 35, 40, 68, 71, and 72 each coordinate dUMP. The Proton acceptor role is filled by His40. 4 disulfides stabilise this stretch: Cys53/Cys109, Cys67/Cys120, Cys85/Cys135, and Cys92/Cys99. The Proton donor role is filled by His144. DUMP is bound at residue Phe145.

This sequence belongs to the pancreatic ribonuclease family.

The protein resides in the secreted. Functionally, cleaves preferentially after uridine bases. Has antimicrobial activity against uropathogenic E.coli (UPEC). Probably contributes to urinary tract sterility. This Rattus norvegicus (Rat) protein is Ribonuclease 4 (Rnase4).